The primary structure comprises 105 residues: Membrane-stabilizing protein A (105 aa).

Residues 1–21 (MQFYLILLAILYLIVSFISIF) form a helical membrane-spanning segment. Over 22-29 (KMEVVFTR) the chain is Cytoplasmic. Residues 30–50 (ILRIIMGVLLLFVLALTTMSF) traverse the membrane as a helical segment. Residues 51–55 (PKENW) lie on the Extracellular side of the membrane. Residues 56–76 (WVFIVLLLLVGNVEVTGFKML) traverse the membrane as a helical segment. At 77-84 (KKDLKGVN) the chain is on the cytoplasmic side. Residues 85 to 105 (ILNLMSLFIFVIYFILTIVLF) form a helical membrane-spanning segment.

It belongs to the MspA family.

Its subcellular location is the membrane. In terms of biological role, plays a role in toxin production, resistance to host innate immune mechanisms, and iron homeostasis. This is Membrane-stabilizing protein A from Staphylococcus aureus (strain NCTC 8325 / PS 47).